We begin with the raw amino-acid sequence, 765 residues long: Ubiquitin-like modifier-activating enzyme atg7 (765 aa).

The GXGXXG motif motif lies at 436-441 (GAGTLG). The Glycyl thioester intermediate role is filled by cysteine 616. Disordered stretches follow at residues 646-670 (AAPA…PPNH) and 744-765 (AAND…PELL). The segment at 721-760 (ALTEKDYITELSGLAEVQRKAEAAANDVEWDSDEEGMEDE) is homodimerization. Over residues 748-765 (VEWDSDEEGMEDEEPELL) the composition is skewed to acidic residues.

It belongs to the ATG7 family. In terms of assembly, homodimer. Interacts with ATG8 through a thioester bond between Cys-616 and the C-terminal Gly of ATG8 and with ATG12 through a thioester bond between Cys-616 and the C-terminal Gly of ATG12. Also interacts with ATG3.

The protein localises to the cytoplasm. Its subcellular location is the preautophagosomal structure. E1-like activating enzyme involved in the 2 ubiquitin-like systems required for cytoplasm to vacuole transport (Cvt) and autophagy. Activates ATG12 for its conjugation with ATG5 and ATG8 for its conjugation with phosphatidylethanolamine. Both systems are needed for the ATG8 association to Cvt vesicles and autophagosomes membranes. Autophagy is essential for maintenance of amino acid levels and protein synthesis under nitrogen starvation. Required for selective autophagic degradation of the nucleus (nucleophagy) as well as for mitophagy which contributes to regulate mitochondrial quantity and quality by eliminating the mitochondria to a basal level to fulfill cellular energy requirements and preventing excess ROS production. Required for normal mycelial growth and conidiogenesis, and regulates sclerotial formation. Plays an essential role in pathogenesis. The sequence is that of Ubiquitin-like modifier-activating enzyme atg7 from Botryotinia fuckeliana (strain BcDW1) (Noble rot fungus).